Reading from the N-terminus, the 403-residue chain is Endophilin-B2 (403 aa).

The segment at 1–27 (MDFNVKKLASDAGVFFSRAMQFTEEKL) is membrane-binding amphipathic helix. The region spanning 24 to 287 (EEKLGQAEKT…LGRFSGTFVG (264 aa)) is the BAR domain. Residues 210–233 (WSDEVEKAEHELRLTQTEFDRQAE) adopt a coiled-coil conformation. Residues 343 to 403 (SGTRKARVLY…VPVTYLELLS (61 aa)) enclose the SH3 domain.

It belongs to the endophilin family. In terms of assembly, homodimer, and heterodimer with SH3GLB1.

The protein resides in the cytoplasm. This is Endophilin-B2 from Gallus gallus (Chicken).